The following is a 226-amino-acid chain: Cell division protein SepF (226 aa).

The disordered stretch occupies residues 20–116 (RAYDDAGYDK…ESLTYHTRDN (97 aa)). Residues 22–44 (YDDAGYDKGGYRESRYRSSRYSE) show a composition bias toward basic and acidic residues. Acidic residues predominate over residues 45 to 56 (DFGDEDDEDEEA). Over residues 62 to 95 (RRGDRSRLERAAARSGDVDHNVEGEQPERVERAS) the composition is skewed to basic and acidic residues. The span at 97–111 (RSITRSAEPSESLTY) shows a compositional bias: polar residues.

The protein belongs to the SepF family. Homodimer. Interacts with FtsZ.

The protein resides in the cytoplasm. Cell division protein that is part of the divisome complex and is recruited early to the Z-ring. Probably stimulates Z-ring formation, perhaps through the cross-linking of FtsZ protofilaments. Its function overlaps with FtsA. In Salinispora arenicola (strain CNS-205), this protein is Cell division protein SepF.